A 260-amino-acid polypeptide reads, in one-letter code: Beta-lactamase SHV-6 (260 aa).

An N-terminal signal peptide occupies residues 1 to 11; sequence LLATLPLAVHA. Residue Ser56 is the Acyl-ester intermediate of the active site. A disulfide bridge links Cys63 with Cys109. Residue Glu154 is the Proton acceptor of the active site. 220-222 contributes to the substrate binding site; that stretch reads KTG.

The protein belongs to the class-A beta-lactamase family.

The enzyme catalyses a beta-lactam + H2O = a substituted beta-amino acid. Its function is as follows. SHV enzymes hydrolyze broad spectrum cephalosporins notably cefotaxime and ceftazidime. This chain is Beta-lactamase SHV-6 (bla), found in Klebsiella pneumoniae.